The primary structure comprises 64 residues: Large ribosomal subunit protein uL29 (64 aa).

Belongs to the universal ribosomal protein uL29 family.

This Thiobacillus denitrificans (strain ATCC 25259 / T1) protein is Large ribosomal subunit protein uL29.